An 81-amino-acid polypeptide reads, in one-letter code: Large ribosomal subunit protein bL31B (81 aa).

This sequence belongs to the bacterial ribosomal protein bL31 family. Type B subfamily. In terms of assembly, part of the 50S ribosomal subunit.

In Borreliella burgdorferi (strain ZS7) (Borrelia burgdorferi), this protein is Large ribosomal subunit protein bL31B.